Here is a 62-residue protein sequence, read N- to C-terminus: Protein sigN176 (62 aa).

In Dictyostelium discoideum (Social amoeba), this protein is Protein sigN176.